The chain runs to 450 residues: Adenosylhomocysteinase (450 aa).

3 residues coordinate substrate: Thr-59, Asp-135, and Glu-160. 161-163 (TTT) provides a ligand contact to NAD(+). The substrate site is built by Lys-190 and Asp-194. NAD(+) is bound by residues Asn-195, 224–229 (GFGDVG), Glu-247, 303–305 (IGH), and Asn-350.

Belongs to the adenosylhomocysteinase family. It depends on NAD(+) as a cofactor.

It is found in the cytoplasm. The catalysed reaction is S-adenosyl-L-homocysteine + H2O = L-homocysteine + adenosine. Its pathway is amino-acid biosynthesis; L-homocysteine biosynthesis; L-homocysteine from S-adenosyl-L-homocysteine: step 1/1. In terms of biological role, adenosylhomocysteine is a competitive inhibitor of S-adenosyl-L-methionine-dependent methyl transferase reactions; therefore adenosylhomocysteinase may play a key role in the control of methylations via regulation of the intracellular concentration of adenosylhomocysteine. In Candida albicans (strain SC5314 / ATCC MYA-2876) (Yeast), this protein is Adenosylhomocysteinase (SAH1).